The following is a 439-amino-acid chain: Chitinase-like protein Idgf1 (439 aa).

The signal sequence occupies residues 1–20 (MRFQLFYILGLLSVTSLTQA). The GH18 domain occupies 22 to 439 (NNLVCYYDST…IVRSIKYFMG (418 aa)). C26 and C53 are joined by a disulfide. N-linked (GlcNAc...) asparagine glycosylation is found at N122, N218, and N346. C340 and C423 are joined by a disulfide.

It belongs to the glycosyl hydrolase 18 family. IDGF subfamily. Post-translationally, glycosylated.

The protein resides in the secreted. Cooperates with insulin-like peptides to stimulate the proliferation, polarization and motility of imaginal disk cells. May act by stabilizing the binding of insulin-like peptides to its receptor through a simultaneous interaction with both molecules to form a multiprotein signaling complex. This is Chitinase-like protein Idgf1 (Idgf1) from Drosophila simulans (Fruit fly).